A 184-amino-acid polypeptide reads, in one-letter code: UPF0301 protein RHOS4_26140 (184 aa).

This sequence belongs to the UPF0301 (AlgH) family.

The protein is UPF0301 protein RHOS4_26140 of Cereibacter sphaeroides (strain ATCC 17023 / DSM 158 / JCM 6121 / CCUG 31486 / LMG 2827 / NBRC 12203 / NCIMB 8253 / ATH 2.4.1.) (Rhodobacter sphaeroides).